The chain runs to 353 residues: Photosystem II protein D1 (353 aa).

N-acetylthreonine is present on threonine 2. A Phosphothreonine modification is found at threonine 2. 3 helical membrane passes run 29–46, 118–133, and 142–156; these read YIGW…TATS, HFLL…EWEL, and WIAV…AATA. Histidine 118 provides a ligand contact to chlorophyll a. A pheophytin a-binding site is contributed by tyrosine 126. Residues aspartate 170 and glutamate 189 each contribute to the [CaMn4O5] cluster site. Residues 197 to 218 traverse the membrane as a helical segment; that stretch reads FHMLGVAGVFGGSLFSAMHGSL. Histidine 198 contacts chlorophyll a. A quinone-binding positions include histidine 215 and 264–265; that span reads SF. Residue histidine 215 participates in Fe cation binding. Histidine 272 is a Fe cation binding site. Residues 274–288 traverse the membrane as a helical segment; sequence FLAAWPVVGIWFTAL. [CaMn4O5] cluster-binding residues include histidine 332, glutamate 333, aspartate 342, and alanine 344. Residues 345–353 constitute a propeptide that is removed on maturation; that stretch reads AIEAPATNG.

The protein belongs to the reaction center PufL/M/PsbA/D family. As to quaternary structure, PSII is composed of 1 copy each of membrane proteins PsbA, PsbB, PsbC, PsbD, PsbE, PsbF, PsbH, PsbI, PsbJ, PsbK, PsbL, PsbM, PsbT, PsbX, PsbY, PsbZ, Psb30/Ycf12, at least 3 peripheral proteins of the oxygen-evolving complex and a large number of cofactors. It forms dimeric complexes. The D1/D2 heterodimer binds P680, chlorophylls that are the primary electron donor of PSII, and subsequent electron acceptors. It shares a non-heme iron and each subunit binds pheophytin, quinone, additional chlorophylls, carotenoids and lipids. D1 provides most of the ligands for the Mn4-Ca-O5 cluster of the oxygen-evolving complex (OEC). There is also a Cl(-1) ion associated with D1 and D2, which is required for oxygen evolution. The PSII complex binds additional chlorophylls, carotenoids and specific lipids. serves as cofactor. In terms of processing, tyr-161 forms a radical intermediate that is referred to as redox-active TyrZ, YZ or Y-Z. C-terminally processed by CTPA; processing is essential to allow assembly of the oxygen-evolving complex and thus photosynthetic growth.

It is found in the plastid membrane. The catalysed reaction is 2 a plastoquinone + 4 hnu + 2 H2O = 2 a plastoquinol + O2. Functionally, photosystem II (PSII) is a light-driven water:plastoquinone oxidoreductase that uses light energy to abstract electrons from H(2)O, generating O(2) and a proton gradient subsequently used for ATP formation. It consists of a core antenna complex that captures photons, and an electron transfer chain that converts photonic excitation into a charge separation. The D1/D2 (PsbA/PsbD) reaction center heterodimer binds P680, the primary electron donor of PSII as well as several subsequent electron acceptors. In Cuscuta reflexa (Southern Asian dodder), this protein is Photosystem II protein D1.